Reading from the N-terminus, the 308-residue chain is Cytochrome b (308 aa).

The next 4 helical transmembrane spans lie at 1-21, 45-66, 81-101, and 146-166; these read FGSLLGICLLTQIITGLLLAT, WLIRNLHANGASFFFICIYIHI, WNVGVILLLTLMATAFVGYVL, and FFALHFLLPFAITGLTLVHLT. 2 residues coordinate heme b: His51 and His65. The heme b site is built by His150 and His164. His169 lines the a ubiquinone pocket. Helical transmembrane passes span 194–214, 256–276, and 288–308; these read MKDILGFALMIIPLAALALFS, LGGVLALAASILVLFLIPLLH, and LSQILFWTLVANLLILTWVGS.

This sequence belongs to the cytochrome b family. As to quaternary structure, the cytochrome bc1 complex contains 11 subunits: 3 respiratory subunits (MT-CYB, CYC1 and UQCRFS1), 2 core proteins (UQCRC1 and UQCRC2) and 6 low-molecular weight proteins (UQCRH/QCR6, UQCRB/QCR7, UQCRQ/QCR8, UQCR10/QCR9, UQCR11/QCR10 and a cleavage product of UQCRFS1). This cytochrome bc1 complex then forms a dimer. The cofactor is heme b.

The protein localises to the mitochondrion inner membrane. Functionally, component of the ubiquinol-cytochrome c reductase complex (complex III or cytochrome b-c1 complex) that is part of the mitochondrial respiratory chain. The b-c1 complex mediates electron transfer from ubiquinol to cytochrome c. Contributes to the generation of a proton gradient across the mitochondrial membrane that is then used for ATP synthesis. In Ptiloprora plumbea (Leaden honeyeater), this protein is Cytochrome b (MT-CYB).